Reading from the N-terminus, the 64-residue chain is Peptide Ctri9677 (64 aa).

A signal peptide spans 1 to 22 (MKNNTILFTFLIVFLIASQIEA). The residue at position 36 (leucine 36) is a Leucine amide. A propeptide spanning residues 40-64 (SEDREFFDFFTDDNLAALEKALKEY) is cleaved from the precursor.

This sequence belongs to the non-disulfide-bridged peptide (NDBP) superfamily. Short antimicrobial peptide (group 4) family. Expressed by the venom gland.

The protein localises to the secreted. Functionally, antimicrobial peptide. In Chaerilus tricostatus (Scorpion), this protein is Peptide Ctri9677.